A 436-amino-acid polypeptide reads, in one-letter code: UDP-N-acetylmuramate--L-alanine ligase (436 aa).

ATP is bound at residue 110–116 (GAHGKTS).

The protein belongs to the MurCDEF family.

It localises to the cytoplasm. The enzyme catalyses UDP-N-acetyl-alpha-D-muramate + L-alanine + ATP = UDP-N-acetyl-alpha-D-muramoyl-L-alanine + ADP + phosphate + H(+). Its pathway is cell wall biogenesis; peptidoglycan biosynthesis. Cell wall formation. The sequence is that of UDP-N-acetylmuramate--L-alanine ligase from Lacticaseibacillus casei (strain BL23) (Lactobacillus casei).